A 201-amino-acid polypeptide reads, in one-letter code: Ribosomal RNA large subunit methyltransferase E (201 aa).

Residues glycine 49, tryptophan 51, aspartate 69, aspartate 87, and aspartate 111 each coordinate S-adenosyl-L-methionine. The active-site Proton acceptor is the lysine 151.

Belongs to the class I-like SAM-binding methyltransferase superfamily. RNA methyltransferase RlmE family.

The protein resides in the cytoplasm. The enzyme catalyses uridine(2552) in 23S rRNA + S-adenosyl-L-methionine = 2'-O-methyluridine(2552) in 23S rRNA + S-adenosyl-L-homocysteine + H(+). Specifically methylates the uridine in position 2552 of 23S rRNA at the 2'-O position of the ribose in the fully assembled 50S ribosomal subunit. In Nitratidesulfovibrio vulgaris (strain DSM 19637 / Miyazaki F) (Desulfovibrio vulgaris), this protein is Ribosomal RNA large subunit methyltransferase E.